A 568-amino-acid chain; its full sequence is Chaperonin homolog Hsp-60, mitochondrial (568 aa).

The protein belongs to the chaperonin (HSP60) family.

Its subcellular location is the mitochondrion matrix. Its function is as follows. Implicated in mitochondrial protein import and macromolecular assembly. May facilitate the correct folding of imported proteins. May also prevent misfolding and promote the refolding and proper assembly of unfolded polypeptides generated under stress conditions in the mitochondrial matrix. This Caenorhabditis elegans protein is Chaperonin homolog Hsp-60, mitochondrial (hsp-60).